A 246-amino-acid polypeptide reads, in one-letter code: Sulfate transporter CysZ (246 aa).

4 consecutive transmembrane segments (helical) span residues 24–44 (LFVL…IGFA), 69–89 (IVWP…FTMV), 148–168 (LLVL…WILF), and 214–234 (LLIP…ATLF).

This sequence belongs to the CysZ family.

It localises to the cell inner membrane. High affinity, high specificity proton-dependent sulfate transporter, which mediates sulfate uptake. Provides the sulfur source for the cysteine synthesis pathway. The sequence is that of Sulfate transporter CysZ from Pseudomonas paraeruginosa (strain DSM 24068 / PA7) (Pseudomonas aeruginosa (strain PA7)).